An 89-amino-acid chain; its full sequence is Small ribosomal subunit protein uS14A (89 aa).

The protein belongs to the universal ribosomal protein uS14 family. As to quaternary structure, part of the 30S ribosomal subunit. Contacts proteins S3 and S10.

Functionally, binds 16S rRNA, required for the assembly of 30S particles and may also be responsible for determining the conformation of the 16S rRNA at the A site. This Streptococcus agalactiae serotype Ia (strain ATCC 27591 / A909 / CDC SS700) protein is Small ribosomal subunit protein uS14A.